Consider the following 134-residue polypeptide: Protein LctB (134 aa).

This chain is Protein LctB (lctB), found in Bacillus caldotenax.